The primary structure comprises 42 residues: Potassium channel toxin gamma-KTx 1.3 (42 aa).

4 disulfides stabilise this stretch: C5-C23, C11-C34, C20-C39, and C24-C41.

The protein belongs to the ergtoxin family. Gamma-KTx 1 subfamily. Expressed by the venom gland.

It is found in the secreted. In terms of biological role, blocks Kv11/ERG potassium channels. The sequence is that of Potassium channel toxin gamma-KTx 1.3 from Centruroides gracilis (Slenderbrown scorpion).